The chain runs to 621 residues: tRNA uridine 5-carboxymethylaminomethyl modification enzyme MnmG (621 aa).

11–16 provides a ligand contact to FAD; the sequence is GGGHAG. 270-284 provides a ligand contact to NAD(+); it reads GPRYCPSIEDKINRF.

It belongs to the MnmG family. In terms of assembly, homodimer. Heterotetramer of two MnmE and two MnmG subunits. Requires FAD as cofactor.

The protein localises to the cytoplasm. In terms of biological role, NAD-binding protein involved in the addition of a carboxymethylaminomethyl (cmnm) group at the wobble position (U34) of certain tRNAs, forming tRNA-cmnm(5)s(2)U34. The polypeptide is tRNA uridine 5-carboxymethylaminomethyl modification enzyme MnmG (Helicobacter pylori (strain Shi470)).